A 208-amino-acid polypeptide reads, in one-letter code: Thymidylate kinase (208 aa).

10-17 provides a ligand contact to ATP; that stretch reads GPEGSGKT.

This sequence belongs to the thymidylate kinase family.

The enzyme catalyses dTMP + ATP = dTDP + ADP. Functionally, phosphorylation of dTMP to form dTDP in both de novo and salvage pathways of dTTP synthesis. This chain is Thymidylate kinase, found in Bacillus cereus (strain 03BB102).